The following is a 209-amino-acid chain: Uracil phosphoribosyltransferase (209 aa).

5-phospho-alpha-D-ribose 1-diphosphate contacts are provided by residues arginine 79, arginine 104, and 131–139 (DPMLATGGS). Residues isoleucine 194 and 199–201 (GDA) each bind uracil. Aspartate 200 contacts 5-phospho-alpha-D-ribose 1-diphosphate.

Belongs to the UPRTase family. Mg(2+) serves as cofactor.

The enzyme catalyses UMP + diphosphate = 5-phospho-alpha-D-ribose 1-diphosphate + uracil. The protein operates within pyrimidine metabolism; UMP biosynthesis via salvage pathway; UMP from uracil: step 1/1. With respect to regulation, allosterically activated by GTP. Its function is as follows. Catalyzes the conversion of uracil and 5-phospho-alpha-D-ribose 1-diphosphate (PRPP) to UMP and diphosphate. The polypeptide is Uracil phosphoribosyltransferase (Latilactobacillus sakei (Lactobacillus sakei)).